Consider the following 281-residue polypeptide: AB hydrolase superfamily protein YclE (281 aa).

One can recognise an AB hydrolase-1 domain in the interval 30–268 (SAVYYPRLFS…SGHQPMLEEP (239 aa)). Residue S95 is the Nucleophile of the active site. Residue D232 is part of the active site. The active-site Proton donor is H261.

This sequence belongs to the AB hydrolase superfamily.

This chain is AB hydrolase superfamily protein YclE (yclE), found in Bacillus subtilis (strain 168).